The chain runs to 390 residues: Transposase for insertion sequence element IS256 in transposon Tn4001 (390 aa).

Belongs to the transposase mutator family.

Its function is as follows. Required for the transposition of the insertion element. This Enterococcus faecalis (strain ATCC 700802 / V583) protein is Transposase for insertion sequence element IS256 in transposon Tn4001.